The primary structure comprises 295 residues: MEFTKMHALGNDYIVINEFDGEKVKEEEKAEFSRKICRRGFSVGADGVIFIQKPTSDEYDVRFRIFNSDGSEAEMCGNGIRCFSKYVYERIMKKNPLKVETKGGLRVSEMEIEGDEVKKIKVYMGVPKFKLKDIPMVVDGYKEDDEFLNGELKLKNPYLPKVKLSVVNVGNPHAVIFVEDNNIDLDFVREHLDVIGKEIEHHEAFPERINVHFVKVLNPNEIRIVTWERGAGYTTACGTGTTASVIMAHKLGKTNNRVLAHLDGGDLEIEIKDDGVYMIGDAVMVYDAKLINIGW.

Asn11 and Asn67 together coordinate substrate. Cys76 (proton donor) is an active-site residue. Residues 77-78 (GN), Asn171, Asn210, and 228-229 (ER) contribute to the substrate site. The Proton acceptor role is filled by Cys237. Substrate is bound at residue 238 to 239 (GT).

The protein belongs to the diaminopimelate epimerase family. Homodimer.

The protein resides in the cytoplasm. The catalysed reaction is (2S,6S)-2,6-diaminopimelate = meso-2,6-diaminopimelate. It participates in amino-acid biosynthesis; L-lysine biosynthesis via DAP pathway; DL-2,6-diaminopimelate from LL-2,6-diaminopimelate: step 1/1. In terms of biological role, catalyzes the stereoinversion of LL-2,6-diaminopimelate (L,L-DAP) to meso-diaminopimelate (meso-DAP), a precursor of L-lysine. This Methanocaldococcus jannaschii (strain ATCC 43067 / DSM 2661 / JAL-1 / JCM 10045 / NBRC 100440) (Methanococcus jannaschii) protein is Diaminopimelate epimerase.